A 189-amino-acid chain; its full sequence is Peptidyl-tRNA hydrolase (189 aa).

A tRNA-binding site is contributed by Tyr-14. His-19 functions as the Proton acceptor in the catalytic mechanism. Residues Tyr-64, Asn-66, and Asn-112 each coordinate tRNA.

It belongs to the PTH family. In terms of assembly, monomer.

The protein resides in the cytoplasm. It catalyses the reaction an N-acyl-L-alpha-aminoacyl-tRNA + H2O = an N-acyl-L-amino acid + a tRNA + H(+). Its function is as follows. Hydrolyzes ribosome-free peptidyl-tRNAs (with 1 or more amino acids incorporated), which drop off the ribosome during protein synthesis, or as a result of ribosome stalling. In terms of biological role, catalyzes the release of premature peptidyl moieties from peptidyl-tRNA molecules trapped in stalled 50S ribosomal subunits, and thus maintains levels of free tRNAs and 50S ribosomes. The polypeptide is Peptidyl-tRNA hydrolase (Clostridium botulinum (strain 657 / Type Ba4)).